The following is a 114-amino-acid chain: Ribosome-binding factor A (114 aa).

It belongs to the RbfA family. In terms of assembly, monomer. Binds 30S ribosomal subunits, but not 50S ribosomal subunits or 70S ribosomes.

Its subcellular location is the cytoplasm. Functionally, one of several proteins that assist in the late maturation steps of the functional core of the 30S ribosomal subunit. Associates with free 30S ribosomal subunits (but not with 30S subunits that are part of 70S ribosomes or polysomes). Required for efficient processing of 16S rRNA. May interact with the 5'-terminal helix region of 16S rRNA. The protein is Ribosome-binding factor A of Vesicomyosocius okutanii subsp. Calyptogena okutanii (strain HA).